The following is a 299-amino-acid chain: MPLSGTPAPNKKRKSSKLIMELTGGGQESSGLNLGKKISVPRDVMLEELSLLTNRGSKMFKLRQMRVEKFIYENHPDVFSDSSMDHFQKFLPTVGGQLGTAGQGFSYSKSNGRGGSQAGGSGSAGQYGSDQQHHLGSGSGAGGTGGPAGQAGRGGAAGTAGVGETGSGDQAGGEGKHITVFKTYISPWERAMGVDPQQKMELGIDLLAYGAKAELPKYKSFNRTAMPYGGYEKASKRMTFQMPKFDLGPLLSEPLVLYNQNLSNRPSFNRTPIPWLSSGEPVDYNVDIGIPLDGETEEL.

Residues 1-34 are disordered; it reads MPLSGTPAPNKKRKSSKLIMELTGGGQESSGLNL. At Ser82 the chain carries Phosphoserine. Residues 102 to 174 form a disordered region; sequence GQGFSYSKSN…TGSGDQAGGE (73 aa). 2 stretches are compositionally biased toward gly residues: residues 112 to 125 and 137 to 173; these read GRGGSQAGGSGSAG and SGSGAGGTGGPAGQAGRGGAAGTAGVGETGSGDQAGG.

This sequence belongs to the myozenin family. Interacts with ACTN2, ACTN3, FLNA, FLNB, FLNC, LDB3, PPP3CA and TCAP. Interacts via its C-terminal region with MYOT. In terms of tissue distribution, expressed primarily in skeletal muscle. Detected at lower levels in heart, prostate and pancreas.

Its subcellular location is the nucleus. The protein localises to the cell projection. It is found in the pseudopodium. Its function is as follows. Myozenins may serve as intracellular binding proteins involved in linking Z-disk proteins such as alpha-actinin, gamma-filamin, TCAP/telethonin, LDB3/ZASP and localizing calcineurin signaling to the sarcomere. Plays an important role in the modulation of calcineurin signaling. May play a role in myofibrillogenesis. The protein is Myozenin-1 of Homo sapiens (Human).